Consider the following 187-residue polypeptide: MATTLTLSEAVTALQQGGVIAYPTEAVWGLGCDPRQETAVHTLLNIKQRASGKGLILVTAELNTLQDWLDLDTLSPERLHEVQASWPGPHTWVLPASTRAPHWITGHHNGLAVRISAHPLVSALCRAWNMALISTSANVAGQSPARRREDLDPSLLPHLAGIVDGPTGGLAQPTSIRDARSGHILRL.

The 184-residue stretch at T4–L187 folds into the YrdC-like domain.

Belongs to the SUA5 family. TsaC subfamily.

It is found in the cytoplasm. The enzyme catalyses L-threonine + hydrogencarbonate + ATP = L-threonylcarbamoyladenylate + diphosphate + H2O. In terms of biological role, required for the formation of a threonylcarbamoyl group on adenosine at position 37 (t(6)A37) in tRNAs that read codons beginning with adenine. Catalyzes the conversion of L-threonine, HCO(3)(-)/CO(2) and ATP to give threonylcarbamoyl-AMP (TC-AMP) as the acyladenylate intermediate, with the release of diphosphate. The chain is Threonylcarbamoyl-AMP synthase from Xylella fastidiosa (strain M12).